The following is a 432-amino-acid chain: MNFDVAIIGGGLAGLTCAIALQQRGKRCVIINNGQAAIDFASGSLDLLSRMPSTTYGENRAVENLKENITALRNELPAHPYSLLGAEKVLAKAQDFERLANELHLDLIGSTEKNHWRVTGLGSLRGAWLSPNSVPTVQGNEPFPHKRIAVLGIEGYHDFQPQLLAANLVLNPQFEHCEVTSGFLNIPQLDELRKNAREFRSVNISQLLEHKLAFKDLVKEIIESAQGAEAVFLPACFGLENQEFMTALRDATKLALFELPTLPPSLLGMRQRIQLRHKFESLGGLMINGDSALNATFEGNQVRCINTRLLEDEEITADNFVLASGSFFSKGLISEFDKIYEPVFESDIIGVEGFNNKDRFTWTAHRFAHPQPYQSAGVAINAQCQVKKCGQFLTNLYAVGNVIGGFNALELGCGSGVAVVTALAVADEILAK.

The protein belongs to the anaerobic G-3-P dehydrogenase subunit B family. As to quaternary structure, composed of a catalytic GlpA/B dimer and of membrane bound GlpC. FMN is required as a cofactor.

The catalysed reaction is a quinone + sn-glycerol 3-phosphate = dihydroxyacetone phosphate + a quinol. It participates in polyol metabolism; glycerol degradation via glycerol kinase pathway; glycerone phosphate from sn-glycerol 3-phosphate (anaerobic route): step 1/1. In terms of biological role, conversion of glycerol 3-phosphate to dihydroxyacetone. Uses fumarate or nitrate as electron acceptor. The protein is Anaerobic glycerol-3-phosphate dehydrogenase subunit B (glpB) of Haemophilus influenzae (strain ATCC 51907 / DSM 11121 / KW20 / Rd).